Here is a 144-residue protein sequence, read N- to C-terminus: Large ribosomal subunit protein uL15 (144 aa).

Residues 1–59 (MRLNTISPAEGSKPTGKRSGRGIGSGLGKTGGVGHKGQKSRSGGRVKPGFEGGQMPIQR) form a disordered region. Gly residues predominate over residues 21 to 35 (RGIGSGLGKTGGVGH).

Belongs to the universal ribosomal protein uL15 family. In terms of assembly, part of the 50S ribosomal subunit.

Its function is as follows. Binds to the 23S rRNA. In Alteromonas mediterranea (strain DSM 17117 / CIP 110805 / LMG 28347 / Deep ecotype), this protein is Large ribosomal subunit protein uL15.